The sequence spans 141 residues: MPNQNLIALGFDFGMKRIGVAVGQTVTHSANAIAILKAQDGVLDWEKIKMLIETWHANVLVVGIPYNMDGSEQTLTFAARKFARKLQTRFGLPLSMVDERLTTIEAKRQWYEQGLTKRPQHLDNYAAKLILEQWLQEQKNE.

It belongs to the YqgF nuclease family.

It is found in the cytoplasm. Its function is as follows. Could be a nuclease involved in processing of the 5'-end of pre-16S rRNA. This Coxiella burnetii (strain CbuK_Q154) (Coxiella burnetii (strain Q154)) protein is Putative pre-16S rRNA nuclease.